We begin with the raw amino-acid sequence, 298 residues long: Cholesterol 25-hydroxylase (298 aa).

An N-linked (GlcNAc...) asparagine glycan is attached at asparagine 5. Transmembrane regions (helical) follow at residues isoleucine 38 to leucine 58, leucine 88 to valine 108, and leucine 124 to leucine 144. In terms of domain architecture, Fatty acid hydroxylase spans valine 128 to threonine 263. Residues tryptophan 142–histidine 146 carry the Histidine box-1 motif. The Histidine box-2 motif lies at histidine 157–histidine 161. The N-linked (GlcNAc...) asparagine glycan is linked to asparagine 163. Positions histidine 238–serine 244 match the Histidine box-3 motif.

The protein belongs to the sterol desaturase family. Fe cation serves as cofactor. N-glycosylated. Widely expressed at low level and at higher level in the lung. Weakly expressed in the heart, lung and kidney.

Its subcellular location is the endoplasmic reticulum membrane. It catalyses the reaction cholesterol + AH2 + O2 = 25-hydroxycholesterol + A + H2O. The enzyme catalyses cholesterol + NADPH + O2 + H(+) = 25-hydroxycholesterol + NADP(+) + H2O. Catalyzes the formation of 25-hydroxycholesterol from cholesterol, leading to repress cholesterol biosynthetic enzymes. Plays a key role in cell positioning and movement in lymphoid tissues: 25-hydroxycholesterol is an intermediate in biosynthesis of 7-alpha,25-dihydroxycholesterol (7-alpha,25-OHC), an oxysterol that acts as a ligand for the G protein-coupled receptor GPR183/EBI2, a chemotactic receptor for a number of lymphoid cells. May play an important role in regulating lipid metabolism by synthesizing a corepressor that blocks sterol regulatory element binding protein (SREBP) processing. In testis, production of 25-hydroxycholesterol by macrophages may play a role in Leydig cell differentiation. Required to restrain inflammation in macrophages: production of 25-hydroxycholesterol protects macrophages from cholesterol overload, thereby preventing mitochondrial DNA release and subsequent activation of the AIM2 inflammasome. Interferon-stimulated gene which has broad antiviral activities against a wide range of enveloped viruses. The sequence is that of Cholesterol 25-hydroxylase from Mus musculus (Mouse).